Here is a 476-residue protein sequence, read N- to C-terminus: Calcium/calmodulin-dependent protein kinase type 1G (476 aa).

Positions 23 to 277 (FIFMEVLGSG…CEKALSHPWI (255 aa)) constitute a Protein kinase domain. ATP-binding positions include 29–37 (LGSGAFSEV) and lysine 52. Catalysis depends on aspartate 143, which acts as the Proton acceptor. Residues 277–317 (IDGNTALHRDIYPSVSLQIQKNFAKSKWRQAFNAAAVVHHM) form an autoinhibitory domain region. Residues 297–318 (KNFAKSKWRQAFNAAAVVHHMR) form a calmodulin-binding region. The tract at residues 325–352 (HSPGVRPEVENRPPETQASETSRPSSPE) is disordered. Residues 338–352 (PETQASETSRPSSPE) show a composition bias toward polar residues.

It belongs to the protein kinase superfamily. CAMK Ser/Thr protein kinase family. CaMK subfamily. May be prenylated on Cys-473. Mainly expressed in brain with small amounts in skeletal muscles, kidney, spleen and liver. Strongly expressed in forebrain neocortex, striatum and limbic system.

The protein localises to the cytoplasm. Its subcellular location is the golgi apparatus membrane. The protein resides in the cell membrane. The enzyme catalyses L-seryl-[protein] + ATP = O-phospho-L-seryl-[protein] + ADP + H(+). The catalysed reaction is L-threonyl-[protein] + ATP = O-phospho-L-threonyl-[protein] + ADP + H(+). Its activity is regulated as follows. Activated by Ca(2+)/calmodulin. Binding of calmodulin is thought to result in a conformational change and leads to activation through phosphorylation by CAMKK1. Calcium/calmodulin-dependent protein kinase belonging to a proposed calcium-triggered signaling cascade. In vitro phosphorylates transcription factor CREB1. The sequence is that of Calcium/calmodulin-dependent protein kinase type 1G (CAMK1G) from Homo sapiens (Human).